We begin with the raw amino-acid sequence, 119 residues long: UPF0102 protein Pmen_0910 (119 aa).

The protein belongs to the UPF0102 family.

The chain is UPF0102 protein Pmen_0910 from Ectopseudomonas mendocina (strain ymp) (Pseudomonas mendocina).